The sequence spans 506 residues: Secreted RxLR effector protein 134 (506 aa).

Positions 1–19 (MQGAYCVAVALLIAASGQA) are cleaved as a signal peptide. A RxLR-dEER motif is present at residues 50 to 71 (RVLQVSHYPKDDLMLLAGNEER).

It belongs to the RxLR effector family.

It localises to the secreted. The protein resides in the host nucleus. Its function is as follows. Secreted effector that completely suppresses the host cell death induced by cell death-inducing proteins. The sequence is that of Secreted RxLR effector protein 134 from Plasmopara viticola (Downy mildew of grapevine).